Consider the following 334-residue polypeptide: Anthranilate phosphoribosyltransferase (334 aa).

5-phospho-alpha-D-ribose 1-diphosphate contacts are provided by residues Gly-79, 82–83 (GD), Ser-87, 89–92 (NIST), 107–115 (KHGNRSISS), and Ser-119. Residue Gly-79 coordinates anthranilate. Position 91 (Ser-91) interacts with Mg(2+). Asn-110 is a binding site for anthranilate. Arg-165 is a binding site for anthranilate. Asp-224 and Glu-225 together coordinate Mg(2+).

Belongs to the anthranilate phosphoribosyltransferase family. Homodimer. Mg(2+) serves as cofactor.

It carries out the reaction N-(5-phospho-beta-D-ribosyl)anthranilate + diphosphate = 5-phospho-alpha-D-ribose 1-diphosphate + anthranilate. Its pathway is amino-acid biosynthesis; L-tryptophan biosynthesis; L-tryptophan from chorismate: step 2/5. Its function is as follows. Catalyzes the transfer of the phosphoribosyl group of 5-phosphorylribose-1-pyrophosphate (PRPP) to anthranilate to yield N-(5'-phosphoribosyl)-anthranilate (PRA). This chain is Anthranilate phosphoribosyltransferase, found in Streptococcus pneumoniae (strain ATCC 700669 / Spain 23F-1).